The following is an 83-amino-acid chain: Protein ORF5 (83 aa).

It belongs to the microviridae C protein family.

In terms of biological role, plays a central role in the packaging of viral DNA into phage procapsid, which occurs in the late stage of infection. Can interact with the replicative complex after the completion of one round of DNA synthesis. When protein ORF5 is bound to the replicative form, the complex becomes accessible to procapsid and serves as a DNA packaging apparatus. The protein is Protein ORF5 of Spiroplasma melliferum (SpV4).